The sequence spans 469 residues: Acetyl-CoA decarbonylase/synthase complex subunit beta 2 (469 aa).

The [Ni-Fe-S] cluster site is built by cysteine 187, cysteine 190, cysteine 276, and cysteine 278.

Belongs to the CdhC family. Monomer. The ACDS complex is made up of alpha, epsilon, beta, gamma and delta chains with a probable stoichiometry of (alpha(2)epsilon(2))(4)-beta(8)-(gamma(1)delta(1))(8) (Potential). [Ni-Fe-S] cluster is required as a cofactor.

The catalysed reaction is Co(I)-[corrinoid Fe-S protein] + acetyl-CoA + H(+) = methyl-Co(III)-[corrinoid Fe-S protein] + CO + CoA. Its function is as follows. Part of a complex that catalyzes the reversible cleavage of acetyl-CoA, allowing autotrophic growth from CO(2). The alpha-epsilon complex generates CO from CO(2), while the beta subunit (this protein) combines the CO with CoA and a methyl group to form acetyl-CoA. The methyl group, which is incorporated into acetyl-CoA, is transferred to the beta subunit by a corrinoid iron-sulfur protein (the gamma-delta complex). The polypeptide is Acetyl-CoA decarbonylase/synthase complex subunit beta 2 (cdhC2) (Methanocaldococcus jannaschii (strain ATCC 43067 / DSM 2661 / JAL-1 / JCM 10045 / NBRC 100440) (Methanococcus jannaschii)).